The primary structure comprises 357 residues: Ketoreductase CTB6 (357 aa).

Tyrosine 172 provides a ligand contact to NADP(+).

This sequence belongs to the NAD(P)-dependent epimerase/dehydratase family. Dihydroflavonol-4-reductase subfamily.

It functions in the pathway mycotoxin biosynthesis. Its function is as follows. Ketoreductase; part of the gene cluster that mediates the biosynthesis of cercosporin, a light-activated, non-host-selective toxin. The perylenequinone chromophore of cercosporin absorbs light energy to attain an electronically-activated triplet state and produces active oxygen species such as the hydroxyl radical, superoxide, hydrogen peroxide or singlet oxygen upon reaction with oxygen molecules. These reactive oxygen species cause damage to various cellular components including lipids, proteins and nucleic acids. The first step of cercosporin biosynthesis is performed by the polyketide synthase CTB1 which catalyzes the formation of nor-toralactone. The starter unit acyltransferase (SAT) domain of CTB1 initiates polyketide extension by the selective utilization of acetyl-CoA, which is elongated to the heptaketide in the beta-ketoacyl synthase (KS) domain by successive condensations with six malonyl units introduced by the malonyl acyltransferase (MAT) domain. The product template (PT) domain catalyzes C4-C9 and C2-C11 aldol cyclizations and dehydrations to a trihydroxynaphthalene, which is thought to be delivered to the thioesterase (TE) domain for product release. The bifunctional enzyme CTB3 then methylates nor-toralactone to toralactone before conducting an unusual oxidative aromatic ring opening. The O-methyltransferase CTB2 further methylates the nascent OH-6 of the CBT3 product, blocking further oxidation at this site before the reductase CTB6 reduces the 2-oxopropyl ketone at position C7, giving naphthalene. The FAD-dependent monooxygenase CTB5 in concert with the multicopper oxidase CTB12 are responsible for homodimerization of naphthalene with CTB7 installing the dioxepine moiety, finally producing cercosporin. The fasciclin domain-containing protein CTB11 might act with CTB5 and CTB12 whereas the roles of CTB9 and CTB10 have still to be elucidated. The chain is Ketoreductase CTB6 from Cercospora nicotianae (Barn spot disease fungus).